Here is an 89-residue protein sequence, read N- to C-terminus: Cell division topological specificity factor (89 aa).

It belongs to the MinE family.

Its function is as follows. Prevents the cell division inhibition by proteins MinC and MinD at internal division sites while permitting inhibition at polar sites. This ensures cell division at the proper site by restricting the formation of a division septum at the midpoint of the long axis of the cell. This Heliobacterium modesticaldum (strain ATCC 51547 / Ice1) protein is Cell division topological specificity factor.